The primary structure comprises 157 residues: ATP synthase subunit b (157 aa).

The chain crosses the membrane as a helical span at residues leucine 7 to leucine 29.

It belongs to the ATPase B chain family. As to quaternary structure, F-type ATPases have 2 components, F(1) - the catalytic core - and F(0) - the membrane proton channel. F(1) has five subunits: alpha(3), beta(3), gamma(1), delta(1), epsilon(1). F(0) has three main subunits: a(1), b(2) and c(10-14). The alpha and beta chains form an alternating ring which encloses part of the gamma chain. F(1) is attached to F(0) by a central stalk formed by the gamma and epsilon chains, while a peripheral stalk is formed by the delta and b chains.

It is found in the cell inner membrane. Functionally, f(1)F(0) ATP synthase produces ATP from ADP in the presence of a proton or sodium gradient. F-type ATPases consist of two structural domains, F(1) containing the extramembraneous catalytic core and F(0) containing the membrane proton channel, linked together by a central stalk and a peripheral stalk. During catalysis, ATP synthesis in the catalytic domain of F(1) is coupled via a rotary mechanism of the central stalk subunits to proton translocation. Component of the F(0) channel, it forms part of the peripheral stalk, linking F(1) to F(0). The protein is ATP synthase subunit b of Nitrosomonas europaea (strain ATCC 19718 / CIP 103999 / KCTC 2705 / NBRC 14298).